The sequence spans 49 residues: MARNEAAIKRTLEKQICMRCNARNPQRASECRKCGYSNLRPKSKERRAA.

This sequence belongs to the eukaryotic ribosomal protein eL40 family.

The sequence is that of Large ribosomal subunit protein eL40 from Haloquadratum walsbyi (strain DSM 16790 / HBSQ001).